The following is a 316-amino-acid chain: Transaldolase (316 aa).

Lys131 acts as the Schiff-base intermediate with substrate in catalysis.

It belongs to the transaldolase family. Type 1 subfamily. In terms of assembly, homodimer.

The protein resides in the cytoplasm. The catalysed reaction is D-sedoheptulose 7-phosphate + D-glyceraldehyde 3-phosphate = D-erythrose 4-phosphate + beta-D-fructose 6-phosphate. Its pathway is carbohydrate degradation; pentose phosphate pathway; D-glyceraldehyde 3-phosphate and beta-D-fructose 6-phosphate from D-ribose 5-phosphate and D-xylulose 5-phosphate (non-oxidative stage): step 2/3. Functionally, transaldolase is important for the balance of metabolites in the pentose-phosphate pathway. The protein is Transaldolase of Buchnera aphidicola subsp. Acyrthosiphon pisum (strain 5A).